We begin with the raw amino-acid sequence, 406 residues long: Probable endo-xylogalacturonan hydrolase A (406 aa).

The first 18 residues, 1–18, serve as a signal peptide directing secretion; sequence MLYYRNLALLSLLSLSSA. 4 PbH1 repeats span residues 183–213, 214–235, 237–257, and 299–320; these read AKDVTFTNLRMDATSRSDNPPKNTDGFDIGS, STHVTISSVSVSNDDDCVALKP, CNYVTVENVTCTGSHGISVGS, and VKNVTFSDFNVRGCDYAFQIQS. Catalysis depends on Asp-228, which acts as the Proton donor. Asn-244 is a glycosylation site (N-linked (GlcNAc...) asparagine). His-251 is a catalytic residue. A glycan (N-linked (GlcNAc...) asparagine) is linked at Asn-301.

This sequence belongs to the glycosyl hydrolase 28 family.

The protein localises to the secreted. In terms of biological role, pectinolytic enzyme involved in the degradation of xylogalacturonan (xga), a galacturonan backbone heavily substituted with xylose, and which is one important component of the hairy regions of pectin. Activity requires a galacturonic acid backbone substituted with xylose. The chain is Probable endo-xylogalacturonan hydrolase A (xghA) from Neosartorya fischeri (strain ATCC 1020 / DSM 3700 / CBS 544.65 / FGSC A1164 / JCM 1740 / NRRL 181 / WB 181) (Aspergillus fischerianus).